A 255-amino-acid polypeptide reads, in one-letter code: Pimeloyl-[acyl-carrier protein] methyl ester esterase (255 aa).

The 226-residue stretch at 16–241 (LVLLHGWGLN…AAHAPFISHP (226 aa)) folds into the AB hydrolase-1 domain. Substrate-binding positions include Trp22, 81–82 (SL), and 142–146 (FLALQ). The active-site Nucleophile is Ser81. Catalysis depends on residues Asp206 and His234. A substrate-binding site is contributed by His234.

It belongs to the AB hydrolase superfamily. Carboxylesterase BioH family. In terms of assembly, monomer.

It is found in the cytoplasm. It carries out the reaction 6-carboxyhexanoyl-[ACP] methyl ester + H2O = 6-carboxyhexanoyl-[ACP] + methanol + H(+). It functions in the pathway cofactor biosynthesis; biotin biosynthesis. Functionally, the physiological role of BioH is to remove the methyl group introduced by BioC when the pimeloyl moiety is complete. It allows to synthesize pimeloyl-ACP via the fatty acid synthetic pathway through the hydrolysis of the ester bonds of pimeloyl-ACP esters. Also displays a weak thioesterase activity. Can form a complex with CoA, and may be involved in the condensation of CoA and pimelic acid into pimeloyl-CoA, a precursor in biotin biosynthesis. This Serratia marcescens protein is Pimeloyl-[acyl-carrier protein] methyl ester esterase.